Consider the following 312-residue polypeptide: MAKVFSFILVTTALTMGREISALEDCAQEQMRLRAQVRLLETRVKQQQVKIKQLLQENEVQFLDKGDENTVIDLGSKRQYADCSEIFNDGYKLSGFYKIKPLQSPAEFSVYCDMSDGGGWTVIQRRSDGSENFNRGWKDYENGFGNFVQKHGEYWLGNKNLHFLTTQEDYTLKIDLADFEKNSRYAQYKNFKVGDEKNFYELNIGEYSGTAGDSLAGNFHPEVQWWASHQRMKFSTWDRDHDNYEGNCAEEDQSGWWFNRCHSANLNGVYYSGPYTAKTDNGIVWYTWHGWWYSLKSVVMKIRPNDFIPNVI.

A signal peptide spans 1–22; it reads MAKVFSFILVTTALTMGREISA. The stretch at 23 to 61 forms a coiled coil; the sequence is LEDCAQEQMRLRAQVRLLETRVKQQQVKIKQLLQENEVQ. Residues 74–306 enclose the Fibrinogen C-terminal domain; the sequence is LGSKRQYADC…SVVMKIRPND (233 aa). Disulfide bonds link cysteine 83-cysteine 112 and cysteine 248-cysteine 261.

Homodimer. Interacts (via the Fibrinogen C-terminal domain) with LAG3 (via Ig-like domains 1 and 2). As to expression, under normal conditions, liver-specific.

It localises to the secreted. Immune suppressive molecule that inhibits antigen-specific T-cell activation by acting as a major ligand of LAG3. Responsible for LAG3 T-cell inhibitory function. Binds LAG3 independently from MHC class II (MHC-II). Secreted by, and promotes growth of, hepatocytes. This chain is Fibrinogen-like protein 1, found in Homo sapiens (Human).